Here is a 178-residue protein sequence, read N- to C-terminus: Caveolin-1 (178 aa).

Position 2 is an N-acetylserine (Ser2). Ser2 bears the Phosphoserine mark. Residues 2–94 (SGGKYVDSEG…WKASFTTFTV (93 aa)) are required for homooligomerization. At 2-104 (SGGKYVDSEG…TKYWFYRLLS (103 aa)) the chain is on the cytoplasmic side. Lys5 carries the N6-acetyllysine; alternate modification. A Glycyl lysine isopeptide (Lys-Gly) (interchain with G-Cter in ubiquitin); alternate cross-link involves residue Lys5. Phosphotyrosine is present on Tyr6. Phosphoserine is present on Ser9. Position 14 is a phosphotyrosine; by ABL1 (Tyr14). Tyr25 is modified (phosphotyrosine). Residues Lys26, Lys30, Lys39, Lys47, and Lys57 each participate in a glycyl lysine isopeptide (Lys-Gly) (interchain with G-Cter in ubiquitin) cross-link. The tract at residues 82–94 (DGIWKASFTTFTV) is interaction with CAVIN3. The helical intramembrane region spans 105 to 125 (AVFGIPMALIWGIYFAIVSFL). The Cytoplasmic portion of the chain corresponds to 126-178 (HIWVVVPYIKSFLIEIQCISRVYSIYIHTFCDPLFEAFGKVFSNIRINTQKEI). The interacts with SPRY1, SPRY2, SPRY3 and SPRY4 stretch occupies residues 131-142 (VPYIKSFLIEIQ). S-palmitoyl cysteine attachment occurs at residues Cys143 and Cys156. The segment at 149–160 (SIYIHTFCDPLF) is interacts with SPRY1, SPRY2, and SPRY4. The interval 167–178 (FSNIRINTQKEI) is interacts with SPRY1, SPRY2, SPRY3 and SPRY4.

It belongs to the caveolin family. As to quaternary structure, homooligomer. Interacts (via the N-terminus) with DPP4; the interaction is direct. Forms a stable heterooligomeric complex with CAV2 that targets to lipid rafts and drives caveolae formation. Interacts with PACSIN2; this interaction induces membrane tubulation. Interacts with BMX, BTK, CTNNB1, CDH1, GLIPR2, JUP, NOSTRIN, SNAP25 and STX1A. Interacts with SLC7A9. Interacts with TGFBR1. Interacts with CAVIN3 (via leucine-zipper domain) in a cholesterol-sensitive manner. Interacts with CAVIN1. Interacts with EHD2 in a cholesterol-dependent manner. Forms a ternary complex with UBXN6 and VCP; mediates CAV1 targeting to lysosomes for degradation. Interacts with ABCG1; this interaction regulates ABCG1-mediated cholesterol efflux. Interacts with NEU3; this interaction enhances NEU3 sialidase activity within caveola. Interacts (via C-terminus) with SPRY1, SPRY2 (via C-terminus), SPRY3, and SPRY4. Phosphorylated at Tyr-14 by ABL1 in response to oxidative stress. Post-translationally, ubiquitinated. Undergo monoubiquitination and multi- and/or polyubiquitination. Monoubiquitination of N-terminal lysines promotes integration in a ternary complex with UBXN6 and VCP which promotes oligomeric CAV1 targeting to lysosomes for degradation. Ubiquitinated by ZNRF1; leading to degradation and modulation of the TLR4-mediated immune response.

The protein resides in the golgi apparatus membrane. It localises to the cell membrane. The protein localises to the membrane. It is found in the caveola. Its subcellular location is the membrane raft. Its function is as follows. May act as a scaffolding protein within caveolar membranes. Forms a stable heterooligomeric complex with CAV2 that targets to lipid rafts and drives caveolae formation. Mediates the recruitment of CAVIN proteins (CAVIN1/2/3/4) to the caveolae. Interacts directly with G-protein alpha subunits and can functionally regulate their activity. Involved in the costimulatory signal essential for T-cell receptor (TCR)-mediated T-cell activation. Its binding to DPP4 induces T-cell proliferation and NF-kappa-B activation in a T-cell receptor/CD3-dependent manner. Recruits CTNNB1 to caveolar membranes and may regulate CTNNB1-mediated signaling through the Wnt pathway. Negatively regulates TGFB1-mediated activation of SMAD2/3 by mediating the internalization of TGFBR1 from membrane rafts leading to its subsequent degradation. Binds 20(S)-hydroxycholesterol (20(S)-OHC). This is Caveolin-1 (CAV1) from Rhinolophus ferrumequinum (Greater horseshoe bat).